A 396-amino-acid polypeptide reads, in one-letter code: Interleukin-3 receptor subunit alpha (396 aa).

An N-terminal signal peptide occupies residues 1-16 (MAANLWLILGLLASHS). At 17 to 331 (SDLAAVREAP…VCPPEVMPVK (315 aa)) the chain is on the extracellular side. 5 cysteine pairs are disulfide-bonded: Cys62/Cys79, Cys87/Cys223, Cys125/Cys134, Cys165/Cys187, and Cys245/Cys323. Asn91 is a glycosylation site (N-linked (GlcNAc...) asparagine). Asn213, Asn246, Asn272, and Asn283 each carry an N-linked (GlcNAc...) asparagine glycan. Residues 312 to 316 (LSSWS) carry the WSXWS motif motif. A helical transmembrane segment spans residues 332 to 355 (TALVTSVATVLGAGLVAAGLLLWW). Residues 356 to 396 (RKSLLYRLCPPIPRLRLPLAGEMVVWEPALEDCEVTPVTDA) are Cytoplasmic-facing. Lys357 participates in a covalent cross-link: Glycyl lysine isopeptide (Lys-Gly) (interchain with G-Cter in ubiquitin). A Box 1 motif motif is present at residues 363-371 (LCPPIPRLR).

This sequence belongs to the type I cytokine receptor family. Type 5 subfamily. As to quaternary structure, interacts with IL3. Heterodimer of an alpha and a beta subunit. The beta subunit is common to the IL3, IL5 and GM-CSF receptors. Ubiquitinated at Lys-357 by RNFT2 in response to IL3. Ubiquitination leads ligand-induced degradation by the proteasome. Ubiquitinated by RNF128 via 'Lys-27'-linked polyubiquitination, facilitating its degradation through the lysosomal pathway.

The protein resides in the cell membrane. Its subcellular location is the endomembrane system. Cell surface receptor for IL3 expressed on hematopoietic progenitor cells, monocytes and B-lymphocytes that controls the production and differentiation of hematopoietic progenitor cells into lineage-restricted cells. Ligand stimulation rapidly induces hetrodimerization with IL3RB, phosphorylation and enzyme activity of effector proteins such as JAK2 and PI3K that play a role in signaling cell proliferation and differentiation. Activation of JAK2 leads to STAT5-mediated transcriptional program. This chain is Interleukin-3 receptor subunit alpha (Il3ra), found in Mus musculus (Mouse).